A 427-amino-acid polypeptide reads, in one-letter code: MSSVEVNRENADVANTNRQANLAEGYEIKELNESQKQYIRSSIPILESSGVNLTKAFYQKMLGNYPEVLPYFNKAHQISLSQPRILAFALLNYAKNIDDLTSLSAFMDQIVVKHVGLQIKAEHYPIVGHCLLSTMQELLPSDVATPAFLEAWTTAYGNLAKILIDSEKKVYQSQPWNGFVEFKVTELINESSDVKSVYLGPKDPAFRISHAHPGQYVSVLWEIPGLSHKTLREYSLSNRVDTCRNQFRISVRRVAGGVVSNFVHDNLKVGDIVGVSPPAGNFVYKRSEENVNRPLLCFAGGIGITPLIPIIETALLDGRKVNFCYSSRNYVSRPFKQWLEQLKLKYKENLKLKEFFSEESSVTKEQIVDEVMTRIINEEDLEKLDLSECDIYMLGPNNYMRFVKQELVKLGVEPNKVQSEFFGPYIP.

Residues 30-168 (ELNESQKQYI…LAKILIDSEK (139 aa)) form the Globin domain. Histidine 114 provides a ligand contact to heme b. Catalysis depends on charge relay system residues tyrosine 124 and glutamate 167. Residues 176 to 427 (WNGFVEFKVT…QSEFFGPYIP (252 aa)) are reductase. The region spanning 177–285 (NGFVEFKVTE…SPPAGNFVYK (109 aa)) is the FAD-binding FR-type domain. Residues tyrosine 216 and 232–235 (REYS) each bind FAD. 301 to 306 (GIGITP) contributes to the NADP(+) binding site. Residue 421–424 (FFGP) coordinates FAD.

The protein belongs to the globin family. Two-domain flavohemoproteins subfamily. It in the C-terminal section; belongs to the flavoprotein pyridine nucleotide cytochrome reductase family. The cofactor is FAD. It depends on heme b as a cofactor.

Its subcellular location is the cytoplasm. The protein resides in the nucleus. It catalyses the reaction 2 nitric oxide + NADPH + 2 O2 = 2 nitrate + NADP(+) + H(+). It carries out the reaction 2 nitric oxide + NADH + 2 O2 = 2 nitrate + NAD(+) + H(+). Functionally, is involved in NO detoxification in an aerobic process, termed nitric oxide dioxygenase (NOD) reaction that utilizes O(2) and NAD(P)H to convert NO to nitrate, which protects the fungus from various noxious nitrogen compounds. Therefore, plays a central role in the inducible response to nitrosative stress. Its function is as follows. In the presence of oxygen and NADH, it has NADH oxidase activity, which leads to the generation of superoxide and H(2)O(2). Under anaerobic conditions, it also exhibits nitric oxide reductase and FAD reductase activities. However, all these reactions are much lower than NOD activity. The sequence is that of Flavohemoprotein from Schizosaccharomyces pombe (strain 972 / ATCC 24843) (Fission yeast).